The following is a 305-amino-acid chain: Protoheme IX farnesyltransferase (305 aa).

A run of 9 helical transmembrane segments spans residues 28 to 48 (IIEL…QGVP), 52 to 72 (LVLL…ALNM), 101 to 121 (LAFG…TVNW), 122 to 142 (LSAW…TMIL), 149 to 169 (NIVW…SSVT), 174 to 194 (WAPV…YWPL), 218 to 238 (VVAR…LLLT), 240 to 260 (LGYT…FWLW), and 283 to 303 (LFHW…VDPF).

This sequence belongs to the UbiA prenyltransferase family. Protoheme IX farnesyltransferase subfamily.

It is found in the cell membrane. It carries out the reaction heme b + (2E,6E)-farnesyl diphosphate + H2O = Fe(II)-heme o + diphosphate. The protein operates within porphyrin-containing compound metabolism; heme O biosynthesis; heme O from protoheme: step 1/1. Converts heme B (protoheme IX) to heme O by substitution of the vinyl group on carbon 2 of heme B porphyrin ring with a hydroxyethyl farnesyl side group. The protein is Protoheme IX farnesyltransferase of Streptomyces avermitilis (strain ATCC 31267 / DSM 46492 / JCM 5070 / NBRC 14893 / NCIMB 12804 / NRRL 8165 / MA-4680).